The sequence spans 437 residues: Vacuolar protein sorting-associated protein 4A (437 aa).

The MIT domain occupies 2-80; that stretch reads TTSTLQKAID…KDYLRNKEKH (79 aa). K8 carries the post-translational modification N6-acetyllysine. Residues 15 to 37 adopt a coiled-coil conformation; sequence KATEEDKAKNYEEALRLYQHAVE. The segment at 75–106 is disordered; that stretch reads RNKEKHGKKPVKENQSEGKGSDSDSEGDNPEK. Positions 84–96 are enriched in basic and acidic residues; it reads PVKENQSEGKGSD. S95 and S97 each carry phosphoserine. 167–174 is an ATP binding site; that stretch reads GPPGTGKS.

The protein belongs to the AAA ATPase family. In terms of assembly, proposed to be monomeric or homodimeric in nucleotide-free form and to oligomerize upon binding to ATP to form two stacked hexameric or heptameric rings with a central pore through which ESCRT-III substrates are translocated in an ATP-dependent manner. Interacts with CHMP1A, CHMP1B, CHMP2A, CHMP2B, CHMP3, CHMP4A, CHMP4B, CHMP4C and CHMP6. Interacts with VPS4B; the interaction suggests a heteromeric assembly with VPS4B. Interacts with SPAST. Interacts with IST1. Interacts with ZFYVE19/ANCHR; leading to retain it at midbody. Highly expressed in testis and moderately in heart and brain. Not detected in spleen, lung, liver, skeletal muscle or kidney.

It is found in the late endosome membrane. It localises to the midbody. The protein localises to the cytoplasm. The protein resides in the cytoskeleton. Its subcellular location is the spindle. The catalysed reaction is ATP + H2O = ADP + phosphate + H(+). Involved in late steps of the endosomal multivesicular bodies (MVB) pathway. Recognizes membrane-associated ESCRT-III assemblies and catalyzes their disassembly, possibly in combination with membrane fission. Redistributes the ESCRT-III components to the cytoplasm for further rounds of MVB sorting. MVBs contain intraluminal vesicles (ILVs) that are generated by invagination and scission from the limiting membrane of the endosome and mostly are delivered to lysosomes enabling degradation of membrane proteins, such as stimulated growth factor receptors, lysosomal enzymes and lipids. It is required for proper accomplishment of various processes including the regulation of endosome size, primary cilium organization, mitotic spindle organization and chromosome segregation, and nuclear envelope sealing and spindle disassembly during anaphase. In conjunction with the ESCRT machinery also appears to function in topologically equivalent membrane fission events, such as the terminal stages of cytokinesis. Involved in cytokinesis: retained at the midbody by ZFYVE19/ANCHR and CHMP4C until abscission checkpoint signaling is terminated at late cytokinesis. It is then released following dephosphorylation of CHMP4C, leading to abscission. VPS4A/B are required for the exosomal release of SDCBP, CD63 and syndecan. Critical for normal erythroblast cytokinesis and correct erythropoiesis. This is Vacuolar protein sorting-associated protein 4A from Mus musculus (Mouse).